A 491-amino-acid chain; its full sequence is MTDELNSQFTAVWNTVVAELNGDDNQYLSSFPPLTPQQRAWLTLVKPLTMAEGFALLSVPSSFVQNEIERHLRGPIVEALSRRLGENVELGVRIAAPAPGEDSEVAGAAPEVELDEVDETTEALASAHESWPSYFINRPGGADKAETPDTSLNARYTFESFVIGASNRFSHAAAVAVSEAPARAYNPLFIWGESGLGKTHLLHAAGNYAQRLFPGMRVKYVSTEEFTNDFINSLRDDRRVAFKRSYRDIDVLLVDDIQFIEGKEGIQEEFFHTFNTLHNANKQIVISSDRPPKGLATLEDRLRTRFEWGLITDVQPPELETRIAILRKKAQMDRLDVPDDVLELIASRIERNIRELEGALIRVTAFASLNKSPIELSLAEIVLRDLIPDANAIQISAATIMAVTAEYFDTTVEELRGPGKTRALAQARQIAMYLCRELTDLSLPKIGQTFGRDHTTVMYADKKVRGEMAQRREVFDHVKELTARIRQRSRH.

The segment at 1–86 (MTDELNSQFT…VEALSRRLGE (86 aa)) is domain I, interacts with DnaA modulators. Residues 86–150 (ENVELGVRIA…GADKAETPDT (65 aa)) are domain II. Residues 151–367 (SLNARYTFES…GALIRVTAFA (217 aa)) form a domain III, AAA+ region region. ATP-binding residues include G195, G197, K198, and T199. The tract at residues 368–491 (SLNKSPIELS…TARIRQRSRH (124 aa)) is domain IV, binds dsDNA.

This sequence belongs to the DnaA family. In terms of assembly, oligomerizes as a right-handed, spiral filament on DNA at oriC.

It is found in the cytoplasm. In terms of biological role, plays an essential role in the initiation and regulation of chromosomal replication. ATP-DnaA binds to the origin of replication (oriC) to initiate formation of the DNA replication initiation complex once per cell cycle. Binds the DnaA box (a 9 base pair repeat at the origin) and separates the double-stranded (ds)DNA. Forms a right-handed helical filament on oriC DNA; dsDNA binds to the exterior of the filament while single-stranded (ss)DNA is stabiized in the filament's interior. The ATP-DnaA-oriC complex binds and stabilizes one strand of the AT-rich DNA unwinding element (DUE), permitting loading of DNA polymerase. After initiation quickly degrades to an ADP-DnaA complex that is not apt for DNA replication. Binds acidic phospholipids. The sequence is that of Chromosomal replication initiator protein DnaA from Mycobacteroides abscessus (strain ATCC 19977 / DSM 44196 / CCUG 20993 / CIP 104536 / JCM 13569 / NCTC 13031 / TMC 1543 / L948) (Mycobacterium abscessus).